Reading from the N-terminus, the 548-residue chain is Luciferin 4-monooxygenase (548 aa).

The short motif at 546–548 is the Microbody targeting signal element; that stretch reads AKM.

This sequence belongs to the ATP-dependent AMP-binding enzyme family. Requires Mg(2+) as cofactor.

It is found in the peroxisome. It catalyses the reaction firefly D-luciferin + ATP + O2 = firefly oxyluciferin + hnu + AMP + CO2 + diphosphate. Its function is as follows. Produces green light with a wavelength of 544 nm. This chain is Luciferin 4-monooxygenase, found in Nipponoluciola cruciata (Genji firefly).